Consider the following 427-residue polypeptide: Glutamate-1-semialdehyde 2,1-aminomutase (427 aa).

N6-(pyridoxal phosphate)lysine is present on Lys-265.

The protein belongs to the class-III pyridoxal-phosphate-dependent aminotransferase family. HemL subfamily. In terms of assembly, homodimer. Requires pyridoxal 5'-phosphate as cofactor.

Its subcellular location is the cytoplasm. It carries out the reaction (S)-4-amino-5-oxopentanoate = 5-aminolevulinate. The protein operates within porphyrin-containing compound metabolism; protoporphyrin-IX biosynthesis; 5-aminolevulinate from L-glutamyl-tRNA(Glu): step 2/2. This chain is Glutamate-1-semialdehyde 2,1-aminomutase, found in Actinobacillus succinogenes (strain ATCC 55618 / DSM 22257 / CCUG 43843 / 130Z).